Here is a 133-residue protein sequence, read N- to C-terminus: Small ribosomal subunit protein uS8 (133 aa).

The protein belongs to the universal ribosomal protein uS8 family. As to quaternary structure, part of the 30S ribosomal subunit.

Functionally, one of the primary rRNA binding proteins, it binds directly to 16S rRNA central domain where it helps coordinate assembly of the platform of the 30S subunit. In Saccharolobus solfataricus (strain ATCC 35092 / DSM 1617 / JCM 11322 / P2) (Sulfolobus solfataricus), this protein is Small ribosomal subunit protein uS8.